The primary structure comprises 119 residues: Protein yippee-like 1 (119 aa).

In terms of domain architecture, Yippee spans 19-116; it reads RTYSCIHCRA…IELAHMIKDN (98 aa). Positions 23, 26, 79, and 82 each coordinate Zn(2+). The Nuclear localization signal motif lies at 99–104; that stretch reads KYKEGK.

This sequence belongs to the yippee family.

It is found in the nucleus. Functionally, may play a role in epithelioid conversion of fibroblasts. This Chlorocebus aethiops (Green monkey) protein is Protein yippee-like 1 (YPEL1).